The sequence spans 91 residues: Small integral membrane protein 12-B (91 aa).

Residues Tyr12 to Phe34 traverse the membrane as a helical segment.

Belongs to the SMIM12 family.

It localises to the membrane. The chain is Small integral membrane protein 12-B (smim12-b) from Xenopus laevis (African clawed frog).